Consider the following 135-residue polypeptide: Protein Wnt-7c (135 aa).

Disulfide bonds link cysteine 3/cysteine 17 and cysteine 5/cysteine 12. Residue serine 9 is the site of O-palmitoleoyl serine; by PORCN attachment. N-linked (GlcNAc...) asparagine glycosylation is found at asparagine 62, asparagine 85, and asparagine 98. Cystine bridges form between cysteine 81–cysteine 112, cysteine 97–cysteine 107, and cysteine 134–cysteine 135.

It belongs to the Wnt family. Palmitoleoylation is required for efficient binding to frizzled receptors. Depalmitoleoylation leads to Wnt signaling pathway inhibition.

The protein localises to the secreted. The protein resides in the extracellular space. Its subcellular location is the extracellular matrix. Its function is as follows. Ligand for members of the frizzled family of seven transmembrane receptors. Probable developmental protein. May be a signaling molecule which affects the development of discrete regions of tissues. Is likely to signal over only few cell diameters. The protein is Protein Wnt-7c (wnt7c) of Xenopus laevis (African clawed frog).